A 122-amino-acid polypeptide reads, in one-letter code: T-cell receptor beta chain V region C5 (122 aa).

Positions 1 to 7 (ILLCAKH) are cleaved as a signal peptide. The v segment stretch occupies residues 8 to 103 (MEAAVTQSPR…TAVYFCASSG (96 aa)). C31 and C99 are joined by a disulfide. The interval 104 to 108 (TGGAL) is d segment. A j segment region spans residues 109–122 (DTQYFGPGTRLLVL).

This Mus musculus (Mouse) protein is T-cell receptor beta chain V region C5.